We begin with the raw amino-acid sequence, 65 residues long: Protein translocase subunit SecE (65 aa).

At Met1–Val27 the chain is on the cytoplasmic side. The chain crosses the membrane as a helical span at residues Lys28–Leu59. Residues Ser60–Leu65 lie on the Periplasmic side of the membrane.

This sequence belongs to the SecE/SEC61-gamma family. Component of the Sec protein translocase complex. Heterotrimer consisting of SecY, SecE and SecG subunits. The heterotrimers can form oligomers, although 1 heterotrimer is thought to be able to translocate proteins. Interacts with SecDF, and other proteins may be involved. The channel interacts with SecA via subunit SecY.

It is found in the cell inner membrane. In terms of biological role, essential subunit of the protein translocation channel SecYEG. Clamps together the 2 halves of SecY. May contact the channel plug during translocation. The sequence is that of Protein translocase subunit SecE from Aquifex aeolicus (strain VF5).